A 164-amino-acid chain; its full sequence is Nucleotide-binding protein Daro_3028 (164 aa).

Belongs to the YajQ family.

In terms of biological role, nucleotide-binding protein. This is Nucleotide-binding protein Daro_3028 from Dechloromonas aromatica (strain RCB).